Reading from the N-terminus, the 408-residue chain is Multidrug resistance protein MdtG (408 aa).

Helical transmembrane passes span 16–36 (LIVAWLGCFLTGAAFSLVMPF), 58–78 (IVFSITFLFSAIASPFWGGLA), 92–112 (LGMGIVMVLMGLAQNIWQFLI), 115–135 (ALLGLLGGFVPNANALIATQV), 146–166 (TLSTGGVSGALLGPMAGGLLA), 173–193 (PVFFITASVLILCFFVTLFCI), 224–244 (LFVTTLIIQVATGSIAPILTL), 256–276 (VAFISGMIASVPGVAALLSAP), 290–310 (ILITALIFSVLLLIPMSYVQT), 319–339 (FLLGAADGALLPAVQTLLVYN), and 378–398 (AVFLVTAGVVLFNAVYSWNSL).

The protein belongs to the major facilitator superfamily. DHA1 family. MdtG (TC 2.A.1.2.20) subfamily.

Its subcellular location is the cell inner membrane. Confers resistance to fosfomycin and deoxycholate. The sequence is that of Multidrug resistance protein MdtG from Escherichia coli O7:K1 (strain IAI39 / ExPEC).